Here is a 663-residue protein sequence, read N- to C-terminus: Bifunctional polymyxin resistance protein ArnA (663 aa).

The tract at residues 1–307 is formyltransferase ArnAFT; that stretch reads MSPKAVVFAY…EFGLVEGSQL (307 aa). His106 functions as the Proton donor; for formyltransferase activity in the catalytic mechanism. Residues Arg116 and 138 to 142 each bind (6R)-10-formyltetrahydrofolate; that span reads VKRAD. Residues 317-663 are dehydrogenase ArnADH; sequence RRTRVLILGV…EAMAEKADMR (347 aa). NAD(+) is bound by residues Asp350 and 371–372; that span reads DI. Residues Ala396, Tyr401, and 435–436 each bind UDP-alpha-D-glucuronate; that span reads TS. Residue Glu437 is the Proton acceptor; for decarboxylase activity of the active site. UDP-alpha-D-glucuronate-binding positions include Arg463, Asn494, 528-537, and Tyr615; that span reads RLVDGGAQKR. The Proton donor; for decarboxylase activity role is filled by Arg621.

It in the N-terminal section; belongs to the Fmt family. UDP-L-Ara4N formyltransferase subfamily. This sequence in the C-terminal section; belongs to the NAD(P)-dependent epimerase/dehydratase family. UDP-glucuronic acid decarboxylase subfamily. Homohexamer, formed by a dimer of trimers.

It catalyses the reaction UDP-alpha-D-glucuronate + NAD(+) = UDP-beta-L-threo-pentopyranos-4-ulose + CO2 + NADH. It carries out the reaction UDP-4-amino-4-deoxy-beta-L-arabinose + (6R)-10-formyltetrahydrofolate = UDP-4-deoxy-4-formamido-beta-L-arabinose + (6S)-5,6,7,8-tetrahydrofolate + H(+). It functions in the pathway nucleotide-sugar biosynthesis; UDP-4-deoxy-4-formamido-beta-L-arabinose biosynthesis; UDP-4-deoxy-4-formamido-beta-L-arabinose from UDP-alpha-D-glucuronate: step 1/3. The protein operates within nucleotide-sugar biosynthesis; UDP-4-deoxy-4-formamido-beta-L-arabinose biosynthesis; UDP-4-deoxy-4-formamido-beta-L-arabinose from UDP-alpha-D-glucuronate: step 3/3. It participates in bacterial outer membrane biogenesis; lipopolysaccharide biosynthesis. Bifunctional enzyme that catalyzes the oxidative decarboxylation of UDP-glucuronic acid (UDP-GlcUA) to UDP-4-keto-arabinose (UDP-Ara4O) and the addition of a formyl group to UDP-4-amino-4-deoxy-L-arabinose (UDP-L-Ara4N) to form UDP-L-4-formamido-arabinose (UDP-L-Ara4FN). The modified arabinose is attached to lipid A and is required for resistance to polymyxin and cationic antimicrobial peptides. The polypeptide is Bifunctional polymyxin resistance protein ArnA (Pseudomonas savastanoi pv. phaseolicola (strain 1448A / Race 6) (Pseudomonas syringae pv. phaseolicola (strain 1448A / Race 6))).